We begin with the raw amino-acid sequence, 321 residues long: Serine protease 52 (321 aa).

The signal sequence occupies residues 1–27; the sequence is MKRWKDRRTGLLLPLVLLLFGACSSLA. The region spanning 56–287 is the Peptidase S1 domain; it reads IVGGKPANIL…YVRWISKQTA (232 aa). A disulfide bond links C81 and C97. Catalysis depends on charge relay system residues H96 and D142. Residue N153 is glycosylated (N-linked (GlcNAc...) asparagine). 3 cysteine pairs are disulfide-bonded: C175–C242, C208–C221, and C232–C263. The active-site Charge relay system is the S236. A helical transmembrane segment spans residues 300-320; it reads ACPLVLSCRAILFLYFVMFLL.

The protein belongs to the peptidase S1 family.

It localises to the membrane. Its function is as follows. Probable serine protease. This chain is Serine protease 52 (Prss52), found in Mus musculus (Mouse).